A 466-amino-acid polypeptide reads, in one-letter code: Asparagine--tRNA ligase (466 aa).

It belongs to the class-II aminoacyl-tRNA synthetase family. Homodimer.

It is found in the cytoplasm. It carries out the reaction tRNA(Asn) + L-asparagine + ATP = L-asparaginyl-tRNA(Asn) + AMP + diphosphate + H(+). The protein is Asparagine--tRNA ligase of Shigella dysenteriae serotype 1 (strain Sd197).